We begin with the raw amino-acid sequence, 594 residues long: Solute carrier family 22 member 14 (594 aa).

Topologically, residues 1–70 are cytoplasmic; the sequence is MAGEENFKEE…EFGTFQQRLV (70 aa). A helical membrane pass occupies residues 71–91; the sequence is ALTFIPSIMSAFFMFADHFVF. Residues 92 to 184 are Extracellular-facing; the sequence is TAQKPYCNTS…LVCGMETKKD (93 aa). 4 N-linked (GlcNAc...) asparagine glycosylation sites follow: Asn-99, Asn-117, Asn-125, and Asn-150. A helical transmembrane segment spans residues 185–205; that stretch reads TAQIMFMAGLPIGSLIFRLIT. Residues 206 to 210 lie on the Cytoplasmic side of the membrane; sequence DKMGR. Residues 211 to 231 form a helical membrane-spanning segment; sequence YPAILLSLLGLIIFGFGTAFM. Residues 232–235 are Extracellular-facing; sequence NSFH. The chain crosses the membrane as a helical span at residues 236–256; that stretch reads LYLFFRFGISQSVVGYAISSI. Residues 257 to 270 lie on the Cytoplasmic side of the membrane; that stretch reads SLATEWLVGEHRAH. The chain crosses the membrane as a helical span at residues 271–291; that stretch reads AIILGHCFFAVGAVLLTGIAY. The Extracellular segment spans residues 292–297; it reads SLPHWQ. A helical transmembrane segment spans residues 298–318; the sequence is LLFLVGGILVIPFISYIWILP. Residues 319–379 lie on the Cytoplasmic side of the membrane; it reads ESPRWLMMKG…DFCKNRQLCK (61 aa). The chain crosses the membrane as a helical span at residues 380 to 400; sequence VTLVMSCVWFTVSYTYFTLSL. The Extracellular segment spans residues 401-408; sequence RMRELGVS. A helical membrane pass occupies residues 409–431; that stretch reads VHFRHVVPSIMEVPARLCCIFLL. Topologically, residues 432-437 are cytoplasmic; that stretch reads QQIGRK. The chain crosses the membrane as a helical span at residues 438-458; it reads WSLAVTLLQAIIWCLLLLFLP. The Extracellular portion of the chain corresponds to 459–488; it reads EGEDGLRLKWPRCPATELKSMTILVLMLRE. The helical transmembrane segment at 489–509 threads the bilayer; the sequence is FSLAATVTVFFLYTAELLPTV. The Cytoplasmic segment spans residues 510 to 512; it reads LRA. Residues 513–533 form a helical membrane-spanning segment; sequence TGLGLVSLASVAGAILSLTII. Residues 534-538 are Extracellular-facing; sequence SQTPS. A helical membrane pass occupies residues 539–559; the sequence is LLPIFLCCVLAIVAFSLSSLL. At 560 to 594 the chain is on the cytoplasmic side; that stretch reads PETRDQPLSESLNHSSQIRNKVKDMKTKETSSDDV. The segment at 566 to 594 is disordered; sequence PLSESLNHSSQIRNKVKDMKTKETSSDDV. Residues 567-578 show a composition bias toward polar residues; it reads LSESLNHSSQIR. A compositionally biased stretch (basic and acidic residues) spans 580-594; sequence KVKDMKTKETSSDDV.

The protein belongs to the major facilitator (TC 2.A.1) superfamily. Organic cation transporter (TC 2.A.1.19) family. In terms of tissue distribution, ubiquitous.

The protein resides in the mitochondrion inner membrane. Its subcellular location is the cell projection. It is found in the cilium. It localises to the flagellum membrane. The enzyme catalyses riboflavin(in) = riboflavin(out). Its function is as follows. Riboflavin transporter localized at the inner mitochondrial membrane of the spermatozoa midpiece, which is required for male fertility. SLC22A14-mediated riboflavin transport is essential for spermatozoa energy generation and motility: riboflavin is the precursor of FMN and FAD, which are coenzymes of many enzymes in the TCA cycle (the citric acid cycle) in mitochondria. Required for sperm motility and normal sperm flagellar structure. The chain is Solute carrier family 22 member 14 from Homo sapiens (Human).